The sequence spans 512 residues: Ribose import ATP-binding protein RbsA 1 (512 aa).

2 ABC transporter domains span residues 8–244 (FRME…IGRE) and 257–502 (PEEK…LNIG). An ATP-binding site is contributed by 40–47 (GENGAGKS).

Belongs to the ABC transporter superfamily. Ribose importer (TC 3.A.1.2.1) family. The complex is composed of an ATP-binding protein (RbsA), two transmembrane proteins (RbsC) and a solute-binding protein (RbsB).

It localises to the cell inner membrane. It carries out the reaction D-ribose(out) + ATP + H2O = D-ribose(in) + ADP + phosphate + H(+). Part of the ABC transporter complex RbsABC involved in ribose import. Responsible for energy coupling to the transport system. The chain is Ribose import ATP-binding protein RbsA 1 from Rhizobium etli (strain ATCC 51251 / DSM 11541 / JCM 21823 / NBRC 15573 / CFN 42).